The sequence spans 408 residues: LL-diaminopimelate aminotransferase (408 aa).

2 residues coordinate substrate: Y15 and G42. Residues Y72, 108 to 109 (SK), Y132, N187, Y218, and 246 to 248 (SFS) each bind pyridoxal 5'-phosphate. K109, Y132, and N187 together coordinate substrate. At K249 the chain carries N6-(pyridoxal phosphate)lysine. Pyridoxal 5'-phosphate is bound by residues R257 and N292. 2 residues coordinate substrate: N292 and R388.

Belongs to the class-I pyridoxal-phosphate-dependent aminotransferase family. LL-diaminopimelate aminotransferase subfamily. Homodimer. It depends on pyridoxal 5'-phosphate as a cofactor.

It catalyses the reaction (2S,6S)-2,6-diaminopimelate + 2-oxoglutarate = (S)-2,3,4,5-tetrahydrodipicolinate + L-glutamate + H2O + H(+). Its pathway is amino-acid biosynthesis; L-lysine biosynthesis via DAP pathway; LL-2,6-diaminopimelate from (S)-tetrahydrodipicolinate (aminotransferase route): step 1/1. Its function is as follows. Involved in the synthesis of meso-diaminopimelate (m-DAP or DL-DAP), required for both lysine and peptidoglycan biosynthesis. Catalyzes the direct conversion of tetrahydrodipicolinate to LL-diaminopimelate. This Prochlorococcus marinus (strain MIT 9301) protein is LL-diaminopimelate aminotransferase.